We begin with the raw amino-acid sequence, 387 residues long: 1-deoxy-D-xylulose 5-phosphate reductoisomerase (387 aa).

NADPH contacts are provided by T11, G12, S13, I14, G37, R39, and N123. K124 contacts 1-deoxy-D-xylulose 5-phosphate. An NADPH-binding site is contributed by E125. D147 contacts Mn(2+). Residues S148, E149, S173, and H196 each coordinate 1-deoxy-D-xylulose 5-phosphate. A Mn(2+)-binding site is contributed by E149. G202 serves as a coordination point for NADPH. 1-deoxy-D-xylulose 5-phosphate-binding residues include S209, N214, K215, and E218. A Mn(2+)-binding site is contributed by E218.

Belongs to the DXR family. The cofactor is Mg(2+). It depends on Mn(2+) as a cofactor.

The catalysed reaction is 2-C-methyl-D-erythritol 4-phosphate + NADP(+) = 1-deoxy-D-xylulose 5-phosphate + NADPH + H(+). Its pathway is isoprenoid biosynthesis; isopentenyl diphosphate biosynthesis via DXP pathway; isopentenyl diphosphate from 1-deoxy-D-xylulose 5-phosphate: step 1/6. Catalyzes the NADPH-dependent rearrangement and reduction of 1-deoxy-D-xylulose-5-phosphate (DXP) to 2-C-methyl-D-erythritol 4-phosphate (MEP). In Corynebacterium diphtheriae (strain ATCC 700971 / NCTC 13129 / Biotype gravis), this protein is 1-deoxy-D-xylulose 5-phosphate reductoisomerase.